We begin with the raw amino-acid sequence, 223 residues long: Ribose-5-phosphate isomerase A (223 aa).

Substrate-binding positions include 29–32, 82–85, and 95–98; these read TGST, DGAD, and KGGG. Glu-104 (proton acceptor) is an active-site residue. Residue Lys-122 coordinates substrate.

Belongs to the ribose 5-phosphate isomerase family. In terms of assembly, homodimer.

The enzyme catalyses aldehydo-D-ribose 5-phosphate = D-ribulose 5-phosphate. Its pathway is carbohydrate degradation; pentose phosphate pathway; D-ribose 5-phosphate from D-ribulose 5-phosphate (non-oxidative stage): step 1/1. Catalyzes the reversible conversion of ribose-5-phosphate to ribulose 5-phosphate. The sequence is that of Ribose-5-phosphate isomerase A from Neisseria meningitidis serogroup C / serotype 2a (strain ATCC 700532 / DSM 15464 / FAM18).